A 1930-amino-acid polypeptide reads, in one-letter code: Myosin-16 (1930 aa).

One can recognise a Myosin N-terminal SH3-like domain in the interval 35–84 (DIKKSCWVKDEKEGFIAGEIQSEQGDQVTVKTVNNQTVTVKKDDVQQMNP). The region spanning 88–774 (YQASDMADMT…ILAKLEDMRD (687 aa)) is the Myosin motor domain. Residue 181–188 (GESGAGKT) participates in ATP binding. Actin-binding regions lie at residues 652–674 (LNKL…VPNE) and 753–767 (KIGH…GILA). Residues 777 to 806 (LAKIMTMLQCRLRGFLMRIEFKKMLERRIG) enclose the IQ domain. A coiled-coil region spans residues 835-1921 (LLNVARQEEE…ALNKLRTRHR (1087 aa)). Residues 1116–1137 (EELEAERSMRAKVEKQRSDLSR) form a disordered region. Basic and acidic residues predominate over residues 1120–1137 (AERSMRAKVEKQRSDLSR).

It belongs to the TRAFAC class myosin-kinesin ATPase superfamily. Myosin family.

Its subcellular location is the cytoplasm. The protein localises to the myofibril. Its function is as follows. May play a role in masticatory muscles contraction. The protein is Myosin-16 of Canis lupus familiaris (Dog).